Here is a 569-residue protein sequence, read N- to C-terminus: Proline--tRNA ligase (569 aa).

This sequence belongs to the class-II aminoacyl-tRNA synthetase family. ProS type 1 subfamily. In terms of assembly, homodimer.

Its subcellular location is the cytoplasm. It carries out the reaction tRNA(Pro) + L-proline + ATP = L-prolyl-tRNA(Pro) + AMP + diphosphate. Catalyzes the attachment of proline to tRNA(Pro) in a two-step reaction: proline is first activated by ATP to form Pro-AMP and then transferred to the acceptor end of tRNA(Pro). As ProRS can inadvertently accommodate and process non-cognate amino acids such as alanine and cysteine, to avoid such errors it has two additional distinct editing activities against alanine. One activity is designated as 'pretransfer' editing and involves the tRNA(Pro)-independent hydrolysis of activated Ala-AMP. The other activity is designated 'posttransfer' editing and involves deacylation of mischarged Ala-tRNA(Pro). The misacylated Cys-tRNA(Pro) is not edited by ProRS. In Desulforamulus reducens (strain ATCC BAA-1160 / DSM 100696 / MI-1) (Desulfotomaculum reducens), this protein is Proline--tRNA ligase.